A 248-amino-acid chain; its full sequence is MRFDVVTLFPEMFSALTQWGITGRACQQSLASVHLWNPRDFCPDPRKTVDDRAYGGGPGMVMMAKPLEDTVAGIQASHQAAGIKSGPICLLAPQGERFSQKIATDILDYGNLSFICGRYEAVDQRFIDRNVDIQLSIGDFVLSGGEIPAMTIMDAVIRLVPGALGDGESATQDSFMNGLLDYPHYTRPEIYENLLVPDVLLGGHHAKIADWRRQKSLELTLRLRPDLIESARANGLLTREDEQFLRSL.

Residues Gly-117 and 137–142 (IGDFVL) each bind S-adenosyl-L-methionine.

Belongs to the RNA methyltransferase TrmD family. As to quaternary structure, homodimer.

The protein localises to the cytoplasm. The catalysed reaction is guanosine(37) in tRNA + S-adenosyl-L-methionine = N(1)-methylguanosine(37) in tRNA + S-adenosyl-L-homocysteine + H(+). Specifically methylates guanosine-37 in various tRNAs. This chain is tRNA (guanine-N(1)-)-methyltransferase, found in Polynucleobacter asymbioticus (strain DSM 18221 / CIP 109841 / QLW-P1DMWA-1) (Polynucleobacter necessarius subsp. asymbioticus).